We begin with the raw amino-acid sequence, 195 residues long: HTH-type transcriptional regulator BetI (195 aa).

The HTH tetR-type domain occupies 8-68 (PIRRRQLIDA…ATMRDITSQL (61 aa)). The H-T-H motif DNA-binding region spans 31-50 (TIAQIARRAGVSTGIISHYF).

It functions in the pathway amine and polyamine biosynthesis; betaine biosynthesis via choline pathway [regulation]. Its function is as follows. Repressor involved in the biosynthesis of the osmoprotectant glycine betaine. It represses transcription of the choline transporter BetT and the genes of BetAB involved in the synthesis of glycine betaine. This chain is HTH-type transcriptional regulator BetI, found in Klebsiella pneumoniae (strain 342).